A 221-amino-acid polypeptide reads, in one-letter code: 2-C-methyl-D-erythritol 4-phosphate cytidylyltransferase (221 aa).

It belongs to the IspD/TarI cytidylyltransferase family. IspD subfamily.

It catalyses the reaction 2-C-methyl-D-erythritol 4-phosphate + CTP + H(+) = 4-CDP-2-C-methyl-D-erythritol + diphosphate. It functions in the pathway isoprenoid biosynthesis; isopentenyl diphosphate biosynthesis via DXP pathway; isopentenyl diphosphate from 1-deoxy-D-xylulose 5-phosphate: step 2/6. Its function is as follows. Catalyzes the formation of 4-diphosphocytidyl-2-C-methyl-D-erythritol from CTP and 2-C-methyl-D-erythritol 4-phosphate (MEP). The protein is 2-C-methyl-D-erythritol 4-phosphate cytidylyltransferase of Roseobacter denitrificans (strain ATCC 33942 / OCh 114) (Erythrobacter sp. (strain OCh 114)).